We begin with the raw amino-acid sequence, 233 residues long: Homeobox protein not2 (233 aa).

A DNA-binding region (homeobox) is located at residues 135-194 (LKRIRTVFTPEQLERLEKEFLKQQYMVGTERVDLASTLNLTETQVKVWFQNRRIKWRKQS). A disordered region spans residues 212–233 (SSDHTDDSRETEEEEDDVDVEL). A compositionally biased stretch (acidic residues) spans 220-233 (RETEEEEDDVDVEL).

Localized to the dorsal lip of the blastopore (Spemann organizer) during early gastrulation, after which expression continues in tissues derived from the organizer. Expressed in the notochord during mid-gastrulation, the chordoneural hinge, notochord and ventral spinal cord of the tailbud at stage 22, and finally the tip of the tail in the tadpole (stage 35).

Its subcellular location is the nucleus. Transcriptional repressor. Plays a fundamental role in notochord formation, acting within the mesodermal region. Acts downstream of gsc and upstream of chrd and foxa4-A/pintallavis. This is Homeobox protein not2 from Xenopus laevis (African clawed frog).